Reading from the N-terminus, the 263-residue chain is Methylesterase 18 (263 aa).

The active-site Acyl-ester intermediate is Ser-80. Catalysis depends on charge relay system residues Asp-212 and His-240.

Belongs to the AB hydrolase superfamily. Methylesterase family.

The catalysed reaction is methyl (indol-3-yl)acetate + H2O = (indol-3-yl)acetate + methanol + H(+). It participates in plant hormone biosynthesis. Methylesterase shown to have methyl indole-3-acetic acid (MeIAA) esterase activity in vitro. The polypeptide is Methylesterase 18 (Arabidopsis thaliana (Mouse-ear cress)).